Reading from the N-terminus, the 248-residue chain is Ubiquinone biosynthesis O-methyltransferase (248 aa).

Positions 41, 72, 93, and 136 each coordinate S-adenosyl-L-methionine.

The protein belongs to the methyltransferase superfamily. UbiG/COQ3 family.

The catalysed reaction is a 3-demethylubiquinol + S-adenosyl-L-methionine = a ubiquinol + S-adenosyl-L-homocysteine + H(+). It catalyses the reaction a 3-(all-trans-polyprenyl)benzene-1,2-diol + S-adenosyl-L-methionine = a 2-methoxy-6-(all-trans-polyprenyl)phenol + S-adenosyl-L-homocysteine + H(+). It participates in cofactor biosynthesis; ubiquinone biosynthesis. Its function is as follows. O-methyltransferase that catalyzes the 2 O-methylation steps in the ubiquinone biosynthetic pathway. The protein is Ubiquinone biosynthesis O-methyltransferase of Brucella abortus (strain 2308).